The following is a 143-amino-acid chain: Ribosome maturation factor RimP (143 aa).

Belongs to the RimP family.

Its subcellular location is the cytoplasm. Functionally, required for maturation of 30S ribosomal subunits. This Neisseria meningitidis serogroup C (strain 053442) protein is Ribosome maturation factor RimP.